The chain runs to 152 residues: Large ribosomal subunit protein bL9 (152 aa).

Belongs to the bacterial ribosomal protein bL9 family.

Binds to the 23S rRNA. The protein is Large ribosomal subunit protein bL9 of Streptococcus thermophilus (strain ATCC BAA-491 / LMD-9).